Consider the following 605-residue polypeptide: Probable potassium transport system protein Kup (605 aa).

The next 12 helical transmembrane spans lie at 18 to 38 (GLVF…IIAL), 46 to 66 (ILGI…LEYA), 97 to 117 (MAFV…DGVI), 138 to 158 (GLSQ…LFVF), 169 to 189 (AFGP…AISV), 204 to 224 (AISF…EVIL), 247 to 267 (AWYF…AFII), 287 to 307 (FYIP…QALI), 339 to 359 (IYIG…MLVF), 368 to 388 (AYGF…TMIF), 395 to 415 (WKVP…VSNC), and 418 to 438 (LPHG…VILI).

The protein belongs to the HAK/KUP transporter (TC 2.A.72) family.

It is found in the cell inner membrane. The catalysed reaction is K(+)(in) + H(+)(in) = K(+)(out) + H(+)(out). In terms of biological role, transport of potassium into the cell. Likely operates as a K(+):H(+) symporter. This chain is Probable potassium transport system protein Kup, found in Pelobacter propionicus (strain DSM 2379 / NBRC 103807 / OttBd1).